The chain runs to 319 residues: MAAMRRGVILGGVAAGPEGPLVTAARTGRTAVRARAVIRVESAPDGTARLIELRSDVPIVLRQTGASPGRTRAPSTVPALSADALPTATVHLVNATAGPLAGDDLGLDISVGSGVRLVVRSVAATVALPGHGPGPSRFTVSARVAPGGALDFAPEPTVAARGSDHLLVTDVHLATTAWLRLREEIVLGRFGETTGSIRSTLRVDMDAHAEVDPPSEPTPLLRQDLVLGPEIPGLTGPALLGSARALGSLLVAGPDPVGSPAARRESVPAKRAESGAQAAVADGVALLPLAGPGYLISALAENAVTLRRRLEQGPAPATV.

The disordered stretch occupies residues 254–273; the sequence is PDPVGSPAARRESVPAKRAE. A compositionally biased stretch (basic and acidic residues) spans 262–273; that stretch reads ARRESVPAKRAE.

It belongs to the UreD family. As to quaternary structure, ureD, UreF and UreG form a complex that acts as a GTP-hydrolysis-dependent molecular chaperone, activating the urease apoprotein by helping to assemble the nickel containing metallocenter of UreC. The UreE protein probably delivers the nickel.

It is found in the cytoplasm. Required for maturation of urease via the functional incorporation of the urease nickel metallocenter. This chain is Urease accessory protein UreD, found in Frankia casuarinae (strain DSM 45818 / CECT 9043 / HFP020203 / CcI3).